Consider the following 536-residue polypeptide: Phosphoenolpyruvate carboxykinase (ATP) (536 aa).

Residues Arg-61, Tyr-195, and Lys-201 each contribute to the substrate site. ATP is bound by residues Lys-201, His-220, and 236–244 (GLSGTGKTT). Positions 201 and 220 each coordinate Mn(2+). Residue Asp-257 coordinates Mn(2+). Positions 285, 322, and 447 each coordinate ATP. Residue Arg-322 coordinates substrate.

This sequence belongs to the phosphoenolpyruvate carboxykinase (ATP) family. Mn(2+) is required as a cofactor.

It is found in the cytoplasm. The enzyme catalyses oxaloacetate + ATP = phosphoenolpyruvate + ADP + CO2. It functions in the pathway carbohydrate biosynthesis; gluconeogenesis. Functionally, involved in the gluconeogenesis. Catalyzes the conversion of oxaloacetate (OAA) to phosphoenolpyruvate (PEP) through direct phosphoryl transfer between the nucleoside triphosphate and OAA. This Sinorhizobium medicae (strain WSM419) (Ensifer medicae) protein is Phosphoenolpyruvate carboxykinase (ATP).